The primary structure comprises 329 residues: GTP 3',8-cyclase (329 aa).

A Radical SAM core domain is found at 8–234 (AFARKYYYLR…QLRQRSDGPA (227 aa)). Arg-17 is a binding site for GTP. [4Fe-4S] cluster-binding residues include Cys-24 and Cys-28. An S-adenosyl-L-methionine-binding site is contributed by Tyr-30. [4Fe-4S] cluster is bound at residue Cys-31. Arg-68 lines the GTP pocket. Residue Gly-72 coordinates S-adenosyl-L-methionine. A GTP-binding site is contributed by Thr-99. Ser-123 lines the S-adenosyl-L-methionine pocket. Lys-160 is a GTP binding site. Met-194 contributes to the S-adenosyl-L-methionine binding site. The [4Fe-4S] cluster site is built by Cys-257 and Cys-260. GTP is bound at residue 262–264 (RLR). Cys-274 serves as a coordination point for [4Fe-4S] cluster.

Belongs to the radical SAM superfamily. MoaA family. Monomer and homodimer. The cofactor is [4Fe-4S] cluster.

It carries out the reaction GTP + AH2 + S-adenosyl-L-methionine = (8S)-3',8-cyclo-7,8-dihydroguanosine 5'-triphosphate + 5'-deoxyadenosine + L-methionine + A + H(+). It functions in the pathway cofactor biosynthesis; molybdopterin biosynthesis. Functionally, catalyzes the cyclization of GTP to (8S)-3',8-cyclo-7,8-dihydroguanosine 5'-triphosphate. The sequence is that of GTP 3',8-cyclase from Escherichia coli O17:K52:H18 (strain UMN026 / ExPEC).